The primary structure comprises 270 residues: UBX domain-containing protein 8 (270 aa).

Residue M1 is a topological domain, cytoplasmic. Residues 2–22 (ASRGVVGIFFLSAVPLVCLEL) form a helical membrane-spanning segment. The Lumenal portion of the chain corresponds to 23 to 33 (RRGIPDIGIKD). Residues 34–54 (FLLLCGRILLLLALLTLIISV) traverse the membrane as a helical segment. At 55–270 (TTSWLNSFKS…LILEEKEQTN (216 aa)) the chain is on the cytoplasmic side. The interval 130–171 (SGHKLGGDEGTSQTSFETSNREAAKSQNLPKPLTEFPSPAEQ) is disordered. Residue S167 is modified to Phosphoserine. Positions 187 to 263 (TAEEVVTVAL…GITVDTVLIL (77 aa)) constitute a UBX domain.

In terms of assembly, interacts with SYVN1 and VCP. Expressed abundantly in ovary and testis, and weakly in all other tissues tested.

It localises to the endoplasmic reticulum membrane. Its function is as follows. Involved in endoplasmic reticulum-associated degradation (ERAD) for misfolded lumenal proteins, possibly by tethering VCP to the endoplasmic reticulum membrane. May play a role in reproduction. The chain is UBX domain-containing protein 8 (UBXN8) from Homo sapiens (Human).